Consider the following 523-residue polypeptide: 2-isopropylmalate synthase (523 aa).

The Pyruvate carboxyltransferase domain maps to 5–267 (VIIFDTTLRD…HTNINHHEIW (263 aa)). Mn(2+) contacts are provided by Asp14, His202, His204, and Asn238. Positions 392-523 (RLDYFSVQSG…QNKENNKETV (132 aa)) are regulatory domain.

Belongs to the alpha-IPM synthase/homocitrate synthase family. LeuA type 1 subfamily. Homodimer. Mn(2+) is required as a cofactor.

Its subcellular location is the cytoplasm. It carries out the reaction 3-methyl-2-oxobutanoate + acetyl-CoA + H2O = (2S)-2-isopropylmalate + CoA + H(+). Its pathway is amino-acid biosynthesis; L-leucine biosynthesis; L-leucine from 3-methyl-2-oxobutanoate: step 1/4. Functionally, catalyzes the condensation of the acetyl group of acetyl-CoA with 3-methyl-2-oxobutanoate (2-ketoisovalerate) to form 3-carboxy-3-hydroxy-4-methylpentanoate (2-isopropylmalate). The sequence is that of 2-isopropylmalate synthase from Salmonella paratyphi A (strain ATCC 9150 / SARB42).